A 657-amino-acid polypeptide reads, in one-letter code: MAEGSGEVVVVPATGAANGLNNGAGGTSAQTSNPLSRKLRKILDTRLDNDKDMLEALKALSTFFVENSLRTRRNLRGDIERRSLAINEEFVSIFKEVKEELESIHEDVQAMSSCCQDMTSRLQAAKEQTQDLIVKTTKLQAESQRLEIRAQVADAFLSKFQLTSDEMSLLRGTREGPITEDFFKALGRVKQIHNDVKVLLRTNQQTAGLEIMEQMALLQETSYERLYRWAQSECRTLTQESCDISPVLTQAMEALQDRPVLYKYTLDEFGTARRSTVVRGFIDALTRGGPGGTPRPIEMHSHDPLRYVGDMLAWLHQATASEKEHLEALLKHVTAQGVEENIQEVVGHITEGVCRPLKVRIEQVIVAEPGAVLLYKISNLLKFYHHTISGIIGNSATTLLTTIEEMHLLSKKIFFNSLSLHASKLMDKVELPPPDLGPSSALNQTLVLLREVLASHDSSVVPLDARQADFVQVLSCVLDPLLQMCTVSASHLGTADMATFMVNSLYMMKTTLALFEFTDRRLEMLQFQIEAHLDTLINEQASYVLTRAGLSYIYNMVQQHKVEQGPLANLPNLDSVALKAAMVQFDRYLSAPDNLLMPQLNFLLSATVKEQIIKQSTELVCRAYGEVYAAVMNPVNEYKDPGSILHRSPQQVQTLLS.

The protein belongs to the COG6 family. Component of the conserved oligomeric Golgi complex which is composed of eight different subunits and is required for normal Golgi morphology and localization.

The protein resides in the golgi apparatus membrane. Required for normal Golgi function. This Bos taurus (Bovine) protein is Conserved oligomeric Golgi complex subunit 6 (COG6).